A 221-amino-acid polypeptide reads, in one-letter code: Oxaloacetate tautomerase FAHD1, mitochondrial (221 aa).

The N-terminal 24 residues, 1–24, are a transit peptide targeting the mitochondrion; that stretch reads MAASRPLSRFWEWGKNIVCVGRNY. Serine 37 is modified (phosphoserine). Glutamate 68, glutamate 70, and aspartate 99 together coordinate Mg(2+). Lysine 110 bears the N6-acetyllysine mark. Lysine 112 carries the N6-succinyllysine modification.

The protein belongs to the FAH family. Homodimer. The cofactor is Mg(2+). It depends on Mn(2+) as a cofactor.

It is found in the mitochondrion. The protein localises to the cytoplasm. The protein resides in the cytosol. It carries out the reaction oxaloacetate = enol-oxaloacetate. The enzyme catalyses oxaloacetate + H(+) = pyruvate + CO2. The catalysed reaction is a 3-acylpyruvate + H2O = a carboxylate + pyruvate + H(+). It catalyses the reaction acetylpyruvate + H2O = acetate + pyruvate + H(+). It carries out the reaction 3-fumarylpyruvate + H2O = fumarate + pyruvate + H(+). Oxaloacetate decarboxylation is competitively inhibited by oxalate. Functionally, tautomerase that converts enol-oxaloacetate, a strong inhibitor of succinate dehydrogenase, to the physiological keto form of oxaloacetate. It is thereby required to maximize aerobic respiration efficiency by preventing succinate dehydrogenase inhibition. Also acts as a weak oxaloacetate decarboxylase (ODx), catalyzing the decarboxylation of oxaloacetate (OAA) to pyruvate and CO(2), and as such is likely a regulatory enzyme in the TCA cycle. Also displays acylpyruvase activity, being able to hydrolyze acetylpyruvate and fumarylpyruvate in vitro. This Pongo abelii (Sumatran orangutan) protein is Oxaloacetate tautomerase FAHD1, mitochondrial (FAHD1).